The following is a 486-amino-acid chain: Scarecrow-like protein 15 (486 aa).

The disordered stretch occupies residues 1 to 28; it reads MKIPASSPQDTTNNNNNTNSTDSNHLSM. Low complexity predominate over residues 10–24; sequence DTTNNNNNTNSTDSN. The GRAS domain maps to 113–485; the sequence is DSVDNGGFDF…RALVATSAWR (373 aa). Residues 120–179 are leucine repeat I (LRI); the sequence is FDFIEDLIRVVDCVESDELQLAQVVLSRLNQRLRSPAGRPLQRAAFYFKEALGSFLTGSN. Residues 198–266 form a VHIID region; the sequence is IKEYSGISPI…VSGGFLRVTA (69 aa). Residues 232–236 carry the VHIID motif; it reads VHVVD. The tract at residues 278 to 310 is leucine repeat II (LRII); the sequence is LVKENLTQFAAEMKIRFQIEFVLMKTFEMLSFK. The interval 320-410 is PFYRE; sequence TVVLISPAIF…AFVLRPKISA (91 aa). The SAW stretch occupies residues 413–485; sequence ETAADRRHTG…RALVATSAWR (73 aa).

Belongs to the GRAS family. As to expression, expressed in seedlings, roots, leaves and flowers.

The protein resides in the nucleus. Functionally, probable transcription factor involved in plant development. This chain is Scarecrow-like protein 15 (SCL15), found in Arabidopsis thaliana (Mouse-ear cress).